We begin with the raw amino-acid sequence, 186 residues long: MDTETLKKNLQEKMDKALKVLDHELKGLRTGRASVNLLDSVTVEAYGSKMPLSQVASLSTPDARTINVQVWDKSMVSSVEKGITIANLGLTPATDGQLIRLPIPALTEERRKELVKLAHKYGEDTKISLRNIRRDGNEELKKLEKDNIIAKDEHHSLSEQVQKLTDDYSSKVDSAIKQKEQEIMTV.

This sequence belongs to the RRF family.

The protein localises to the cytoplasm. In terms of biological role, responsible for the release of ribosomes from messenger RNA at the termination of protein biosynthesis. May increase the efficiency of translation by recycling ribosomes from one round of translation to another. The chain is Ribosome-recycling factor from Rickettsia felis (strain ATCC VR-1525 / URRWXCal2) (Rickettsia azadi).